Here is a 293-residue protein sequence, read N- to C-terminus: Small ribosomal subunit biogenesis GTPase RsgA 2 (293 aa).

The CP-type G domain maps to 63–223 (SNELVRPPIA…VADTPGFSVL (161 aa)). Residues 112 to 115 (TKVD) and 166 to 174 (GQSGVGKSS) contribute to the GTP site. Cysteine 247, cysteine 252, histidine 254, and cysteine 260 together coordinate Zn(2+).

The protein belongs to the TRAFAC class YlqF/YawG GTPase family. RsgA subfamily. As to quaternary structure, monomer. Associates with 30S ribosomal subunit, binds 16S rRNA. Requires Zn(2+) as cofactor.

It localises to the cytoplasm. In terms of biological role, one of several proteins that assist in the late maturation steps of the functional core of the 30S ribosomal subunit. Helps release RbfA from mature subunits. May play a role in the assembly of ribosomal proteins into the subunit. Circularly permuted GTPase that catalyzes slow GTP hydrolysis, GTPase activity is stimulated by the 30S ribosomal subunit. This chain is Small ribosomal subunit biogenesis GTPase RsgA 2, found in Oceanobacillus iheyensis (strain DSM 14371 / CIP 107618 / JCM 11309 / KCTC 3954 / HTE831).